Consider the following 333-residue polypeptide: Pantothenate synthetase (333 aa).

Residue 27–34 (MGALHEGH) coordinates ATP. The active-site Proton donor is histidine 34. A (R)-pantoate-binding site is contributed by glutamine 61. Glutamine 61 is a beta-alanine binding site. 148–151 (GQKD) contacts ATP. Glutamine 154 provides a ligand contact to (R)-pantoate. ATP contacts are provided by residues valine 177 and 185 to 188 (LSSR).

This sequence belongs to the pantothenate synthetase family. Homodimer.

It is found in the cytoplasm. The catalysed reaction is (R)-pantoate + beta-alanine + ATP = (R)-pantothenate + AMP + diphosphate + H(+). The protein operates within cofactor biosynthesis; (R)-pantothenate biosynthesis; (R)-pantothenate from (R)-pantoate and beta-alanine: step 1/1. Its function is as follows. Catalyzes the condensation of pantoate with beta-alanine in an ATP-dependent reaction via a pantoyl-adenylate intermediate. This is Pantothenate synthetase from Streptomyces avermitilis (strain ATCC 31267 / DSM 46492 / JCM 5070 / NBRC 14893 / NCIMB 12804 / NRRL 8165 / MA-4680).